A 952-amino-acid chain; its full sequence is Protein translocase subunit SecA (952 aa).

Residues glutamine 135, 153 to 157 (GEGKT), and aspartate 575 contribute to the ATP site. Basic and acidic residues predominate over residues 614–624 (RHESRRIDNQL). Disordered regions lie at residues 614 to 636 (RHESRRIDNQLRGRSGRQGDPGS) and 916 to 946 (VSAKAATQSTTPAAKEIGRNDPCPCGSGKKY). The Zn(2+) site is built by cysteine 938, cysteine 940, cysteine 949, and cysteine 950.

Belongs to the SecA family. Monomer and homodimer. Part of the essential Sec protein translocation apparatus which comprises SecA, SecYEG and auxiliary proteins SecDF. Other proteins may also be involved. Requires Zn(2+) as cofactor.

It localises to the cell membrane. Its subcellular location is the cytoplasm. It carries out the reaction ATP + H2O + cellular proteinSide 1 = ADP + phosphate + cellular proteinSide 2.. Its function is as follows. Part of the Sec protein translocase complex. Interacts with the SecYEG preprotein conducting channel. Has a central role in coupling the hydrolysis of ATP to the transfer of proteins into and across the cell membrane, serving as an ATP-driven molecular motor driving the stepwise translocation of polypeptide chains across the membrane. In Dehalococcoides mccartyi (strain ATCC BAA-2100 / JCM 16839 / KCTC 5957 / BAV1), this protein is Protein translocase subunit SecA.